Reading from the N-terminus, the 214-residue chain is Adenylate kinase (214 aa).

10 to 15 contacts ATP; the sequence is GGGKGT. Residues 30 to 59 are NMP; the sequence is STGDMFRENVKGGTELGLKAKEYMDAGQLV. Residues Thr-31, Arg-36, 57–59, 85–88, and Gln-92 contribute to the AMP site; these read QLV and GFPR. The LID stretch occupies residues 126–163; the sequence is GRRVCRVCGATFHVLFNAPKEDGKCDKCGGELYQRSDD. Residue Arg-127 coordinates ATP. Zn(2+)-binding residues include Cys-130 and Cys-133. 136–137 is an ATP binding site; that stretch reads TF. Zn(2+)-binding residues include Cys-150 and Cys-153. Arg-160 and Arg-171 together coordinate AMP. ATP is bound at residue Gln-199.

The protein belongs to the adenylate kinase family. Monomer.

The protein localises to the cytoplasm. The enzyme catalyses AMP + ATP = 2 ADP. The protein operates within purine metabolism; AMP biosynthesis via salvage pathway; AMP from ADP: step 1/1. Catalyzes the reversible transfer of the terminal phosphate group between ATP and AMP. Plays an important role in cellular energy homeostasis and in adenine nucleotide metabolism. This is Adenylate kinase from Desulforudis audaxviator (strain MP104C).